We begin with the raw amino-acid sequence, 227 residues long: ATP-dependent dethiobiotin synthetase BioD (227 aa).

13-18 (DIGKTY) is an ATP binding site. Position 17 (Thr-17) interacts with Mg(2+). Lys-38 is a catalytic residue. Position 42 (Ser-42) interacts with substrate. ATP contacts are provided by residues Asp-55, 116-119 (EGSG), and 179-180 (NN). Residues Asp-55 and Glu-116 each coordinate Mg(2+).

This sequence belongs to the dethiobiotin synthetase family. In terms of assembly, homodimer. The cofactor is Mg(2+).

Its subcellular location is the cytoplasm. The catalysed reaction is (7R,8S)-7,8-diammoniononanoate + CO2 + ATP = (4R,5S)-dethiobiotin + ADP + phosphate + 3 H(+). Its pathway is cofactor biosynthesis; biotin biosynthesis; biotin from 7,8-diaminononanoate: step 1/2. Functionally, catalyzes a mechanistically unusual reaction, the ATP-dependent insertion of CO2 between the N7 and N8 nitrogen atoms of 7,8-diaminopelargonic acid (DAPA, also called 7,8-diammoniononanoate) to form a ureido ring. The protein is ATP-dependent dethiobiotin synthetase BioD of Clostridium botulinum (strain Loch Maree / Type A3).